A 352-amino-acid chain; its full sequence is C-C chemokine receptor type 5 (352 aa).

Residues 1–30 (MDYQVSSPTYDIDYYTSEPCQKINVKQIAA) lie on the Extracellular side of the membrane. Tyrosine 3 carries the sulfotyrosine modification. O-linked (GalNAc...) serine glycans are attached at residues serine 6 and serine 7. Residues tyrosine 10, tyrosine 14, and tyrosine 15 each carry the sulfotyrosine modification. 2 cysteine pairs are disulfide-bonded: cysteine 20–cysteine 269 and cysteine 101–cysteine 178. A helical membrane pass occupies residues 31–58 (RLLPPLYSLVFIFGFVGNILVVLILINC). The Cytoplasmic portion of the chain corresponds to 59–68 (KRLKSMTDIY). Residues 69–89 (LLNLAISDLLFLLTVPFWAHY) form a helical membrane-spanning segment. Topologically, residues 90–102 (AAAQWNFGNTMCQ) are extracellular. A helical transmembrane segment spans residues 103–124 (LLTGLYFIGFFSGIFFIILLTI). Residues 125–141 (DRYLAIVHAVFALKART) are Cytoplasmic-facing. The helical transmembrane segment at 142–166 (VTFGVVTSVITWVVAVFASLPGIIF) threads the bilayer. Over 167–198 (TRYQREGLHYTCSSHFPYSQYQFWKNFQTLKI) the chain is Extracellular. Residues 199–218 (VILGLVLPLLVMVICYSGIL) traverse the membrane as a helical segment. The Cytoplasmic segment spans residues 219–235 (KTLLRCRNEKKRHRAVR). A helical membrane pass occupies residues 236 to 260 (LIFTIMIVYFLFWAPYNIVLLLNTF). The Extracellular portion of the chain corresponds to 261–277 (QEFFGLNNCSSSNRLDQ). Residues 278–301 (AMQVTETLGMTHCCINPIIYAFVG) traverse the membrane as a helical segment. Topologically, residues 302–352 (EKFRNYLLVFFQKHIAKRFCKCCSIFQQEAPERASSVYTRSTGEQETSVGL) are cytoplasmic. 3 S-palmitoyl cysteine lipidation sites follow: cysteine 321, cysteine 323, and cysteine 324. 4 positions are modified to phosphoserine; by BARK1: serine 336, serine 337, serine 342, and serine 349.

It belongs to the G-protein coupled receptor 1 family. As to quaternary structure, interacts with PRAF2. Efficient ligand binding to CCL3/MIP-1alpha and CCL4/MIP-1beta requires sulfation, O-glycosylation and sialic acid modifications. Glycosylation on Ser-6 is required for efficient binding of CCL4. Interacts with GRK2. Interacts with ARRB1 and ARRB2. Interacts with CNIH4. Interacts with S100A4; this interaction stimulates T-lymphocyte chemotaxis. Post-translationally, sulfated on at least 2 of the N-terminal tyrosines. Sulfation is required for efficient binding of the chemokines, CCL3 and CCL4. In terms of processing, palmitoylation in the C-terminal is important for cell surface expression. Phosphorylation on serine residues in the C-terminal is stimulated by binding CC chemokines especially by APO-RANTES. Post-translationally, O-glycosylated, but not N-glycosylated. Ser-6 appears to be the major site even if Ser-7 may be also O-glycosylated. Also sialylated glycans present which contribute to chemokine binding. Thr-16 and Ser-17 may also be glycosylated and, if so, with small moieties such as a T-antigen.

The protein localises to the cell membrane. Receptor for a number of inflammatory CC-chemokines including CCL3/MIP-1-alpha, CCL4/MIP-1-beta and RANTES and subsequently transduces a signal by increasing the intracellular calcium ion level. May play a role in the control of granulocytic lineage proliferation or differentiation. Participates in T-lymphocyte migration to the infection site by acting as a chemotactic receptor. The sequence is that of C-C chemokine receptor type 5 (CCR5) from Erythrocebus patas (Red guenon).